A 360-amino-acid polypeptide reads, in one-letter code: Phosphoserine aminotransferase (360 aa).

Arginine 42 contacts L-glutamate. Residues 76 to 77, tryptophan 102, threonine 152, aspartate 171, and glutamine 194 each bind pyridoxal 5'-phosphate; that span reads AS. Position 195 is an N6-(pyridoxal phosphate)lysine (lysine 195). 236 to 237 is a binding site for pyridoxal 5'-phosphate; sequence NT.

The protein belongs to the class-V pyridoxal-phosphate-dependent aminotransferase family. SerC subfamily. Homodimer. The cofactor is pyridoxal 5'-phosphate.

It is found in the cytoplasm. The catalysed reaction is O-phospho-L-serine + 2-oxoglutarate = 3-phosphooxypyruvate + L-glutamate. The enzyme catalyses 4-(phosphooxy)-L-threonine + 2-oxoglutarate = (R)-3-hydroxy-2-oxo-4-phosphooxybutanoate + L-glutamate. It participates in amino-acid biosynthesis; L-serine biosynthesis; L-serine from 3-phospho-D-glycerate: step 2/3. Catalyzes the reversible conversion of 3-phosphohydroxypyruvate to phosphoserine and of 3-hydroxy-2-oxo-4-phosphonooxybutanoate to phosphohydroxythreonine. This Geobacillus kaustophilus (strain HTA426) protein is Phosphoserine aminotransferase.